Reading from the N-terminus, the 212-residue chain is Large ribosomal subunit protein uL3 (212 aa).

Gln153 carries the N5-methylglutamine modification.

It belongs to the universal ribosomal protein uL3 family. In terms of assembly, part of the 50S ribosomal subunit. Forms a cluster with proteins L14 and L19. Methylated by PrmB.

One of the primary rRNA binding proteins, it binds directly near the 3'-end of the 23S rRNA, where it nucleates assembly of the 50S subunit. The polypeptide is Large ribosomal subunit protein uL3 (Shewanella loihica (strain ATCC BAA-1088 / PV-4)).